Consider the following 310-residue polypeptide: Ribosomal RNA small subunit methyltransferase H (310 aa).

S-adenosyl-L-methionine contacts are provided by residues 47 to 49 (GGH), aspartate 66, phenylalanine 93, aspartate 108, and glutamine 115. Residues 275-310 (RKPFMASEQEQADNPRSRSAKLRIARRRPDTARSGP) are disordered. A compositionally biased stretch (basic and acidic residues) spans 301–310 (RRPDTARSGP).

It belongs to the methyltransferase superfamily. RsmH family.

It localises to the cytoplasm. The catalysed reaction is cytidine(1402) in 16S rRNA + S-adenosyl-L-methionine = N(4)-methylcytidine(1402) in 16S rRNA + S-adenosyl-L-homocysteine + H(+). In terms of biological role, specifically methylates the N4 position of cytidine in position 1402 (C1402) of 16S rRNA. The polypeptide is Ribosomal RNA small subunit methyltransferase H (Synechococcus sp. (strain CC9311)).